Reading from the N-terminus, the 130-residue chain is Anti-adapter protein IraD (130 aa).

The protein belongs to the GpW/Gp25 family. IraD subfamily. Interacts with RssB.

It localises to the cytoplasm. Inhibits RpoS proteolysis by regulating RssB activity, thereby increasing the stability of the sigma stress factor RpoS during oxidative stress. Its effect on RpoS stability is due to its interaction with RssB, which probably blocks the interaction of RssB with RpoS, and the consequent delivery of the RssB-RpoS complex to the ClpXP protein degradation pathway. The sequence is that of Anti-adapter protein IraD from Escherichia coli O139:H28 (strain E24377A / ETEC).